Here is a 208-residue protein sequence, read N- to C-terminus: Probable nicotinate-nucleotide adenylyltransferase (208 aa).

This sequence belongs to the NadD family.

It catalyses the reaction nicotinate beta-D-ribonucleotide + ATP + H(+) = deamido-NAD(+) + diphosphate. It functions in the pathway cofactor biosynthesis; NAD(+) biosynthesis; deamido-NAD(+) from nicotinate D-ribonucleotide: step 1/1. In terms of biological role, catalyzes the reversible adenylation of nicotinate mononucleotide (NaMN) to nicotinic acid adenine dinucleotide (NaAD). This chain is Probable nicotinate-nucleotide adenylyltransferase, found in Kineococcus radiotolerans (strain ATCC BAA-149 / DSM 14245 / SRS30216).